Reading from the N-terminus, the 464-residue chain is AAC-rich mRNA clone AAC11 protein (464 aa).

Positions 1–15 (MSTPTLPNLSQLHGI) are enriched in polar residues. Disordered stretches follow at residues 1-112 (MSTP…HGTN) and 125-464 (SLPQ…SFFH). 3 stretches are compositionally biased toward low complexity: residues 16–65 (QNQS…QQPQ), 78–88 (NPNGLGLMGHN), and 130–160 (INNN…NNSN). Positions 161 to 174 (LGINSSPTQSSANS) are enriched in polar residues. 3 consecutive DNA-binding regions (a.T hook) follow at residues 177–189 (KRSR…NPPS), 198–210 (KRKR…MDEE), and 224–236 (NKKR…PKDE). Residues 240–253 (DYNNTSFSDSNTDG) are compositionally biased toward polar residues. Positions 255–267 (PKKRGRPPKAKGD) form a DNA-binding region, a.T hook 4. Residues 276–428 (NTLGNGILNS…NNAGNLGNLG (153 aa)) are compositionally biased toward low complexity. A compositionally biased stretch (polar residues) spans 433-464 (LHSSDPNNPNAQKSFPDSTNTMDFQPNFSFFH).

In Dictyostelium discoideum (Social amoeba), this protein is AAC-rich mRNA clone AAC11 protein (AAC11).